We begin with the raw amino-acid sequence, 195 residues long: Imidazoleglycerol-phosphate dehydratase (195 aa).

The protein belongs to the imidazoleglycerol-phosphate dehydratase family.

The protein resides in the cytoplasm. It carries out the reaction D-erythro-1-(imidazol-4-yl)glycerol 3-phosphate = 3-(imidazol-4-yl)-2-oxopropyl phosphate + H2O. It functions in the pathway amino-acid biosynthesis; L-histidine biosynthesis; L-histidine from 5-phospho-alpha-D-ribose 1-diphosphate: step 6/9. The chain is Imidazoleglycerol-phosphate dehydratase from Dinoroseobacter shibae (strain DSM 16493 / NCIMB 14021 / DFL 12).